We begin with the raw amino-acid sequence, 1041 residues long: Nuclear pore complex protein NUP98A (1041 aa).

A compositionally biased stretch (polar residues) spans 1 to 34 (MFGSSNPFGQSSGTSPFGSQSLFGQTSNTSSNNP). The tract at residues 1 to 44 (MFGSSNPFGQSSGTSPFGSQSLFGQTSNTSSNNPFAPATPFGTS) is disordered. 44 consecutive repeat copies span residues 2-3 (FG), 8-9 (FG), 17-18 (FG), 23-24 (FG), 41-42 (FG), 56-57 (FG), 64-65 (FG), 79-80 (FG), 87-88 (FG), 94-95 (FG), 103-104 (FG), 109-110 (FG), 124-125 (FG), 135-136 (FG), 140-141 (FG), 146-147 (FG), 154-155 (FG), 162-163 (FG), 170-171 (FG), 178-179 (FG), 186-187 (FG), 194-195 (FG), 202-203 (FG), 210-211 (FG), 217-218 (FG), 222-223 (FG), 228-229 (FG), 236-237 (FG), 244-245 (FG), 252-253 (FG), 260-261 (FG), 268-269 (FG), 276-277 (FG), 284-285 (FG), 294-295 (FG), 300-301 (FG), 307-308 (FG), 312-313 (FG), 319-320 (FG), 329-330 (FG), 334-335 (FG), 339-340 (FG), 411-412 (FG), and 427-428 (FG). The segment at 2–677 (FGSSNPFGQS…QPVAVTNPFG (676 aa)) is 65 X 2 AA repeats of F-G. The disordered stretch occupies residues 98 to 171 (PASSPFGGSS…FGATSTPSFG (74 aa)). The span at 117–171 (STPQSNPFGNSTQQSQPAFGNTSFGSSTPFGATNTPAFGAPSTPSFGATSTPSFG) shows a compositional bias: polar residues. Disordered regions lie at residues 315-347 (TPSP…GGSR) and 392-447 (QRGD…TNPF). Low complexity predominate over residues 430–447 (TSANPTNPFSSSTSTNPF). 21 consecutive repeat copies span residues 459–460 (FG), 466–467 (FG), 471–472 (FG), 480–481 (FG), 491–492 (FG), 497–498 (FG), 506–507 (FG), 514–515 (FG), 521–522 (FG), 533–534 (FG), 555–556 (FG), 562–563 (FG), 565–566 (FG), 573–574 (FG), 586–587 (FG), 604–605 (FG), 627–628 (FG), 632–633 (FG), 650–651 (FG), 655–656 (FG), and 676–677 (FG). Over residues 517-526 (SSSIFGSAPG) the composition is skewed to low complexity. The disordered stretch occupies residues 517-560 (SSSIFGSAPGQGATPAFGNSQPSTLFNSTPSTGQTGSAFGQTGS). Positions 533 to 560 (FGNSQPSTLFNSTPSTGQTGSAFGQTGS) are enriched in polar residues. The disordered stretch occupies residues 734 to 860 (KYRPGENGPK…KERPYKTLSG (127 aa)). Residues 782-793 (SRDKSILPKEQR) are compositionally biased toward basic and acidic residues. The span at 831-846 (TSVNANQKPNGTTRSD) shows a compositional bias: polar residues. The Peptidase S59 domain maps to 885 to 1027 (QSDYFTEPRI…GEWKFRVEHF (143 aa)).

The protein belongs to the nucleoporin GLFG family. As to quaternary structure, part of the nuclear pore complex (NPC). The NPC has an eight-fold symmetrical structure comprising a central transport channel and two rings, the cytoplasmic and nuclear rings, to which eight filaments are attached. The cytoplasmic filaments have loose ends, while the nuclear filaments are joined in a distal ring, forming a nuclear basket. NPCs are highly dynamic in configuration and composition, and can be devided in 3 subcomplexes, the NUP62 subcomplex, the NUP107-160 subcomplex and the NUP93 subcomplex, containing approximately 30 different nucleoporin proteins.

It localises to the nucleus. It is found in the nuclear pore complex. The polypeptide is Nuclear pore complex protein NUP98A (Arabidopsis thaliana (Mouse-ear cress)).